A 469-amino-acid chain; its full sequence is Zinc transporter SLC39A7 (469 aa).

Residues 5–25 (LGAPHWVAVGLLTWAALGLLV) traverse the membrane as a helical segment. Composition is skewed to basic and acidic residues over residues 43-56 (HGHSHRRSHEDFHH) and 66-114 (HTHE…EHSH). The interval 43–122 (HGHSHRRSHE…SHGGYGESGA (80 aa)) is disordered. Pros-methylhistidine is present on H66. 3 helical membrane passes run 138–158 (ALGATVLISAAPFFVLFLIPV), 169–189 (LQILLSFASGGLLGDAFLHLI), and 214–234 (GPILSVGLWVLSGIVAFLVVE). The span at 242–255 (GGHGHSHGHGHTHG) shows a compositional bias: basic residues. The disordered stretch occupies residues 242-313 (GGHGHSHGHG…QNSEEEKTGS (72 aa)). Positions 256–266 (HTQGSHGHGTQ) are enriched in low complexity. Phosphoserine occurs at positions 275 and 276. Over residues 295–313 (RLKDGPLRPQNSEEEKTGS) the composition is skewed to basic and acidic residues. The next 3 helical transmembrane spans lie at 386–406 (LTAIGALAGTACALLTEGGAV), 417–437 (GWVLPFTAGGFIYVATVSVLP), and 448–468 (SLLEVLGLLGGVVMMVLIAHL).

It belongs to the ZIP transporter (TC 2.A.5) family. KE4/Catsup subfamily. As to quaternary structure, homodimer. Methylation at some His residue by METTL9 leads to reduced zinc-binding. Post-translationally, rapidly phosphorylated by CK2 following Zn(2+) treatment. This phosphorylation is required for efficient cytosolic Zn(2+) release.

It localises to the endoplasmic reticulum membrane. Its subcellular location is the golgi apparatus. It is found in the cis-Golgi network membrane. The enzyme catalyses Zn(2+)(in) = Zn(2+)(out). Transports Zn(2+) from the endoplasmic reticulum (ER)/Golgi apparatus to the cytosol, playing an essential role in the regulation of cytosolic zinc levels. Acts as a gatekeeper of zinc release from intracellular stores, requiring post-translational activation by phosphorylation, resulting in activation of multiple downstream pathways leading to cell growth and proliferation. Has an essential role in B cell development and is required for proper B cell receptor signaling. Plays an important role in maintaining intestinal epithelial homeostasis and skin dermis development by regulating ER function. Controls cell signaling pathways involved in glucose metabolism in skeletal muscle. Has a protective role against ER stress in different biological contexts. Mediates Zn(2+)-induced ferroptosis. The polypeptide is Zinc transporter SLC39A7 (Canis lupus familiaris (Dog)).